Here is a 637-residue protein sequence, read N- to C-terminus: PTS system mannitol-specific EIICBA component (637 aa).

Topologically, residues 1-23 are cytoplasmic; the sequence is MSSDIKIKVQSFGRFLSNMVMPN. The 330-residue stretch at 12–341 folds into the PTS EIIC type-2 domain; that stretch reads FGRFLSNMVM…ILLKTSKVKE (330 aa). Residues 24–45 traverse the membrane as a helical segment; it reads IGAFIAWGIITALFIPTGWLPN. The Periplasmic portion of the chain corresponds to 46–49; the sequence is ETLA. A helical membrane pass occupies residues 50–70; the sequence is KLVGPMITYLLPLLIGYTGGK. Topologically, residues 71-133 are cytoplasmic; that stretch reads LVGGERGGVV…SGFEMLVNNF (63 aa). The helical transmembrane segment at 134–155 threads the bilayer; that stretch reads SAGIIGMILAILAFLGIGPIVE. Over 156–164 the chain is Periplasmic; it reads ALSKMLAAG. A helical transmembrane segment spans residues 165 to 185; it reads VNFMVVHDMLPLASIFVEPAK. At 186–272 the chain is on the cytoplasmic side; it reads ILFLNNAINH…VLMNPRLILA (87 aa). The helical transmembrane segment at 273–292 threads the bilayer; sequence VILGGMTGVFTLTILGGGLV. The Periplasmic segment spans residues 293–312; it reads SPASPGSILAVLAMTPKGAY. A helical membrane pass occupies residues 313 to 334; it reads FANIAGVCAAMAVSFVVSAILL. The Cytoplasmic segment spans residues 335–637; the sequence is KTSKVKEEDD…EVLELLAGRK (303 aa). In terms of domain architecture, PTS EIIB type-2 spans 378–473; sequence RKIIVACDAG…RLVAAQRHTA (96 aa). Cysteine 384 serves as the catalytic Phosphocysteine intermediate; for EIIB activity. Position 384 is a phosphocysteine; by EIIA (cysteine 384). A PTS EIIA type-2 domain is found at 494-636; the sequence is FKLGAENIFL…DEVLELLAGR (143 aa). The active-site Tele-phosphohistidine intermediate; for EIIA activity is the histidine 554. Histidine 554 carries the phosphohistidine; by HPr modification.

Homodimer. Post-translationally, an intramolecular phosphotransfer takes places between His-554 and Cys-384.

Its subcellular location is the cell inner membrane. It carries out the reaction D-mannitol(out) + N(pros)-phospho-L-histidyl-[protein] = D-mannitol 1-phosphate(in) + L-histidyl-[protein]. The phosphoenolpyruvate-dependent sugar phosphotransferase system (sugar PTS), a major carbohydrate active transport system, catalyzes the phosphorylation of incoming sugar substrates concomitantly with their translocation across the cell membrane. This system is involved in D-mannitol transport. Also able to use D-mannonic acid. The sequence is that of PTS system mannitol-specific EIICBA component from Escherichia coli (strain K12).